The primary structure comprises 290 residues: Elongation factor Ts, mitochondrial 1 (290 aa).

Belongs to the EF-Ts family.

It localises to the mitochondrion. Functionally, associates with the EF-Tu.GDP complex and induces the exchange of GDP to GTP. It remains bound to the aminoacyl-tRNA.EF-Tu.GTP complex up to the GTP hydrolysis stage on the ribosome. This Postia placenta (strain ATCC 44394 / Madison 698-R) (Brown rot fungus) protein is Elongation factor Ts, mitochondrial 1.